The following is a 359-amino-acid chain: Trans-enoyl reductase FSL5 (359 aa).

Position 47–50 (47–50 (IDGK)) interacts with NADP(+). 134–141 (SGVGTIGL) contacts substrate. NADP(+)-binding positions include 169–172 (STAT), 192–195 (SPHN), Tyr210, and 257–258 (LE). 277-281 (GPTLL) is a binding site for substrate. 346 to 347 (VS) contributes to the NADP(+) binding site.

This sequence belongs to the zinc-containing alcohol dehydrogenase family. Monomer.

Its pathway is secondary metabolite biosynthesis. Trans-enoyl reductase; part of the gene cluster that mediates the biosynthesis of fusarielins F, G and H, decaketide compounds with 5 methylations and a decaline core that act as mycoestrogens as they stimulate growth of MCF-7 breast cancer cells. The initial compound in the pathway is produced by the reducing polyketide synthase FSL1. FSL1 lacks an active enoyl reductase (ER) domain and biosynthesis of fusarielins relies on the trans-acting enoyl reductase FSL5, before it is released through hydrolysis catalyzed by the thioesterase FSL2. Fusarielins F, G, and H have a C11=C12 cis double bond and is fully reduced between C10 and C11 and between C12 and C13. FSL3 can be involved in the formation of the C11=C12 cis double bond by moving a hypothetical C10=C11 or C12=C13 trans double bond to form prefusarielin. Prefusarielin is oxygenated at C15 and C16 by the cytochrome P450 monooxygenase FSL4, resulting in fusarielin F, which subsequently is epoxidized into fusarielin G by the same enzyme. The final step in the pathway is a reduction of the carboxylic acid moiety to yield fusarielin H via a still undetermined mechanism. This is Trans-enoyl reductase FSL5 from Gibberella zeae (strain ATCC MYA-4620 / CBS 123657 / FGSC 9075 / NRRL 31084 / PH-1) (Wheat head blight fungus).